The following is a 240-amino-acid chain: ATP synthase subunit a (240 aa).

6 helical membrane passes run Trp41 to Ile61, Phe92 to Ile112, Ser121 to Phe141, Phe152 to Phe172, Val191 to Val211, and Leu212 to Phe232.

The protein belongs to the ATPase A chain family. In terms of assembly, F-type ATPases have 2 components, CF(1) - the catalytic core - and CF(0) - the membrane proton channel. CF(1) has five subunits: alpha(3), beta(3), gamma(1), delta(1), epsilon(1). CF(0) has three main subunits: a(1), b(2) and c(9-12). The alpha and beta chains form an alternating ring which encloses part of the gamma chain. CF(1) is attached to CF(0) by a central stalk formed by the gamma and epsilon chains, while a peripheral stalk is formed by the delta and b chains.

The protein localises to the cell inner membrane. Its function is as follows. Key component of the proton channel; it plays a direct role in the translocation of protons across the membrane. This is ATP synthase subunit a from Desulfotalea psychrophila (strain LSv54 / DSM 12343).